Here is a 429-residue protein sequence, read N- to C-terminus: UDP-N-acetylglucosamine 1-carboxyvinyltransferase (429 aa).

22–23 (KN) contacts phosphoenolpyruvate. UDP-N-acetyl-alpha-D-glucosamine is bound at residue Arg-102. Cys-126 functions as the Proton donor in the catalytic mechanism. Residue Cys-126 is modified to 2-(S-cysteinyl)pyruvic acid O-phosphothioketal. UDP-N-acetyl-alpha-D-glucosamine is bound by residues 131–135 (RPVDL), Asp-316, and Ile-338.

Belongs to the EPSP synthase family. MurA subfamily.

It is found in the cytoplasm. The enzyme catalyses phosphoenolpyruvate + UDP-N-acetyl-alpha-D-glucosamine = UDP-N-acetyl-3-O-(1-carboxyvinyl)-alpha-D-glucosamine + phosphate. It functions in the pathway cell wall biogenesis; peptidoglycan biosynthesis. Cell wall formation. Adds enolpyruvyl to UDP-N-acetylglucosamine. This chain is UDP-N-acetylglucosamine 1-carboxyvinyltransferase, found in Rhodopseudomonas palustris (strain HaA2).